The chain runs to 427 residues: 3-phosphoshikimate 1-carboxyvinyltransferase (427 aa).

Positions 22, 23, and 27 each coordinate 3-phosphoshikimate. A phosphoenolpyruvate-binding site is contributed by K22. Phosphoenolpyruvate contacts are provided by G97 and R125. Positions 171, 172, 173, 199, 315, 338, and 342 each coordinate 3-phosphoshikimate. Q173 lines the phosphoenolpyruvate pocket. Catalysis depends on D315, which acts as the Proton acceptor. 3 residues coordinate phosphoenolpyruvate: R346, R388, and K413.

It belongs to the EPSP synthase family. As to quaternary structure, monomer.

It localises to the cytoplasm. The enzyme catalyses 3-phosphoshikimate + phosphoenolpyruvate = 5-O-(1-carboxyvinyl)-3-phosphoshikimate + phosphate. It functions in the pathway metabolic intermediate biosynthesis; chorismate biosynthesis; chorismate from D-erythrose 4-phosphate and phosphoenolpyruvate: step 6/7. In terms of biological role, catalyzes the transfer of the enolpyruvyl moiety of phosphoenolpyruvate (PEP) to the 5-hydroxyl of shikimate-3-phosphate (S3P) to produce enolpyruvyl shikimate-3-phosphate and inorganic phosphate. The polypeptide is 3-phosphoshikimate 1-carboxyvinyltransferase (Aliivibrio salmonicida (strain LFI1238) (Vibrio salmonicida (strain LFI1238))).